A 124-amino-acid chain; its full sequence is Small ribosomal subunit protein uS13 (124 aa).

Residues 97–124 are disordered; the sequence is PVRGQRTKTNARTRKGPKRTIAGKKKAR.

The protein belongs to the universal ribosomal protein uS13 family. In terms of assembly, part of the 30S ribosomal subunit. Forms a loose heterodimer with protein S19. Forms two bridges to the 50S subunit in the 70S ribosome.

Its function is as follows. Located at the top of the head of the 30S subunit, it contacts several helices of the 16S rRNA. In the 70S ribosome it contacts the 23S rRNA (bridge B1a) and protein L5 of the 50S subunit (bridge B1b), connecting the 2 subunits; these bridges are implicated in subunit movement. Contacts the tRNAs in the A and P-sites. The chain is Small ribosomal subunit protein uS13 from Mycolicibacterium gilvum (strain PYR-GCK) (Mycobacterium gilvum (strain PYR-GCK)).